The chain runs to 337 residues: Glycerol-3-phosphate dehydrogenase [NAD(P)+] (337 aa).

4 residues coordinate NADPH: Ser11, Trp12, Arg32, and Lys109. Positions 109, 140, and 142 each coordinate sn-glycerol 3-phosphate. Ala144 contacts NADPH. Sn-glycerol 3-phosphate is bound by residues Lys195, Asp248, Ser258, Arg259, and Asn260. The Proton acceptor role is filled by Lys195. Arg259 contributes to the NADPH binding site. The NADPH site is built by Val283 and Glu285.

It belongs to the NAD-dependent glycerol-3-phosphate dehydrogenase family.

The protein localises to the cytoplasm. It carries out the reaction sn-glycerol 3-phosphate + NAD(+) = dihydroxyacetone phosphate + NADH + H(+). The enzyme catalyses sn-glycerol 3-phosphate + NADP(+) = dihydroxyacetone phosphate + NADPH + H(+). It participates in membrane lipid metabolism; glycerophospholipid metabolism. In terms of biological role, catalyzes the reduction of the glycolytic intermediate dihydroxyacetone phosphate (DHAP) to sn-glycerol 3-phosphate (G3P), the key precursor for phospholipid synthesis. The chain is Glycerol-3-phosphate dehydrogenase [NAD(P)+] from Limosilactobacillus fermentum (strain NBRC 3956 / LMG 18251) (Lactobacillus fermentum).